Reading from the N-terminus, the 326-residue chain is uncharacterized protein (326 aa).

3 Solcar repeats span residues 20 to 107 (QDSN…CKKK), 120 to 219 (LTNT…LREF), and 231 to 322 (KSNL…VCDS). Helical transmembrane passes span 24-40 (IAFL…RTVV), 84-104 (GLNC…YEAC), 126-143 (LFSG…TYPL), 195-213 (VWPT…FAVY), 237-254 (LTIG…TYPF), and 297-316 (GLAA…WLVY).

This sequence belongs to the mitochondrial carrier (TC 2.A.29) family.

Its subcellular location is the mitochondrion inner membrane. This is an uncharacterized protein from Saccharomyces cerevisiae (strain ATCC 204508 / S288c) (Baker's yeast).